Consider the following 437-residue polypeptide: Adenylosuccinate synthetase (437 aa).

Residues 12-18 (GDEGKGK) and 40-42 (GHT) contribute to the GTP site. Residue aspartate 13 is the Proton acceptor of the active site. Residues aspartate 13 and glycine 40 each coordinate Mg(2+). Residues 13–16 (DEGK), 38–41 (NAGH), threonine 128, arginine 142, glutamine 223, threonine 238, and arginine 302 contribute to the IMP site. The active-site Proton donor is the histidine 41. 298 to 304 (TTTGRRR) provides a ligand contact to substrate. Residues arginine 304, 330-332 (KLD), and 412-414 (SLG) contribute to the GTP site.

It belongs to the adenylosuccinate synthetase family. Homodimer. Mg(2+) serves as cofactor.

Its subcellular location is the cytoplasm. It catalyses the reaction IMP + L-aspartate + GTP = N(6)-(1,2-dicarboxyethyl)-AMP + GDP + phosphate + 2 H(+). It participates in purine metabolism; AMP biosynthesis via de novo pathway; AMP from IMP: step 1/2. Plays an important role in the de novo pathway of purine nucleotide biosynthesis. Catalyzes the first committed step in the biosynthesis of AMP from IMP. The polypeptide is Adenylosuccinate synthetase (Synechococcus sp. (strain CC9311)).